The following is a 294-amino-acid chain: Octopine-binding periplasmic protein (294 aa).

A signal peptide spans 1-20; the sequence is MRLKSIMCAALFVVAGQAAA. An intrachain disulfide couples C57 to C64.

This sequence belongs to the bacterial solute-binding protein 3 family.

Its subcellular location is the periplasm. Functionally, component of the octopine active transport system probably consisting of four subunits: Q, M, P and T. The polypeptide is Octopine-binding periplasmic protein (occT) (Rhizobium meliloti (Ensifer meliloti)).